Consider the following 636-residue polypeptide: Topoisomerase I damage affected protein 7 (636 aa).

Residues 1–18 are compositionally biased toward polar residues; the sequence is MNSNSTIGRTTLGESDTI. Disordered stretches follow at residues 1–33, 87–109, 246–271, 299–326, and 339–362; these read MNSNSTIGRTTLGESDTISLSFSEPSSSLNSRS, TLVSSTDSSSSSEQDTYSSQYDP, NKDTTFPSSSRNTSTSFYSSSLSSTN, PTSSSVSSSSSKVPSNRPSSSSSSDDTT, and QSTTSSSIPPTTQTPSTSTISTSP. Residue Asn-4 is glycosylated (N-linked (GlcNAc...) asparagine). Composition is skewed to low complexity over residues 19–33 and 87–108; these read SLSFSEPSSSLNSRS and TLVSSTDSSSSSEQDTYSSQYD. Asn-257 carries an N-linked (GlcNAc...) asparagine glycan. Residues 457 to 477 traverse the membrane as a helical segment; sequence IVGSVVGSVGGILICVLVVWF. N-linked (GlcNAc...) asparagine glycosylation occurs at Asn-492. Over residues 510–541 the composition is skewed to polar residues; sequence QAKEASLQAQDSGSQQRNTETASANNPFSNEF. A disordered region spans residues 510–551; it reads QAKEASLQAQDSGSQQRNTETASANNPFSNEFNFKARGNPPP. Lys-512 participates in a covalent cross-link: Glycyl lysine isopeptide (Lys-Gly) (interchain with G-Cter in ubiquitin). N-linked (GlcNAc...) asparagine glycosylation is found at Asn-557, Asn-562, and Asn-626. At Ser-628 the chain carries Phosphoserine.

The protein belongs to the TDA7 family.

The protein localises to the vacuole membrane. This is Topoisomerase I damage affected protein 7 (TDA7) from Saccharomyces cerevisiae (strain ATCC 204508 / S288c) (Baker's yeast).